Consider the following 280-residue polypeptide: Undecaprenyl-diphosphatase (280 aa).

Helical transmembrane passes span 1 to 21 (MTLL…PFPV), 45 to 65 (FLPF…GVFW), 90 to 110 (IFGL…LLEH), 115 to 135 (VFGT…LLMV), 151 to 171 (IATL…LALL), 226 to 246 (IMVQ…ICSL), and 260 to 280 (LTPF…VILL).

It belongs to the UppP family.

Its subcellular location is the cell inner membrane. The catalysed reaction is di-trans,octa-cis-undecaprenyl diphosphate + H2O = di-trans,octa-cis-undecaprenyl phosphate + phosphate + H(+). Its function is as follows. Catalyzes the dephosphorylation of undecaprenyl diphosphate (UPP). Confers resistance to bacitracin. The protein is Undecaprenyl-diphosphatase of Gluconobacter oxydans (strain 621H) (Gluconobacter suboxydans).